The primary structure comprises 177 residues: Protein GrpE (177 aa).

The protein belongs to the GrpE family. As to quaternary structure, homodimer. K(+) serves as cofactor.

It is found in the cytoplasm. In terms of biological role, participates actively in the response to hyperosmotic and heat shock by preventing the aggregation of stress-denatured proteins, in association with DnaK and GrpE. It is the nucleotide exchange factor for DnaK and may function as a thermosensor. Unfolded proteins bind initially to DnaJ; upon interaction with the DnaJ-bound protein, DnaK hydrolyzes its bound ATP, resulting in the formation of a stable complex. GrpE releases ADP from DnaK; ATP binding to DnaK triggers the release of the substrate protein, thus completing the reaction cycle. Several rounds of ATP-dependent interactions between DnaJ, DnaK and GrpE are required for fully efficient folding. The sequence is that of Protein GrpE from Thermus thermophilus (strain ATCC 27634 / DSM 579 / HB8).